We begin with the raw amino-acid sequence, 802 residues long: Bifunctional purine biosynthetic protein ADE5,7 (802 aa).

Residues 1–450 (MLNILVLGNG…QNSESSKVAI (450 aa)) form a GARS region. The ATP-grasp domain maps to 114–330 (KRFMSKHNIP…LAQVFLAAAE (217 aa)). An ATP-binding site is contributed by 141–203 (QAHTDKAFVI…EQFLEGDEIS (63 aa)). The Mg(2+) site is built by Glu298 and Asn300. Residues 451–802 (TYADSGVSVD…CVIENGTKLY (352 aa)) are AIRS. A phosphoserine mark is found at Ser455 and Ser458.

This sequence in the N-terminal section; belongs to the GARS family. In the C-terminal section; belongs to the AIR synthase family. Mg(2+) serves as cofactor. It depends on Mn(2+) as a cofactor.

It localises to the cytoplasm. It carries out the reaction 5-phospho-beta-D-ribosylamine + glycine + ATP = N(1)-(5-phospho-beta-D-ribosyl)glycinamide + ADP + phosphate + H(+). The enzyme catalyses 2-formamido-N(1)-(5-O-phospho-beta-D-ribosyl)acetamidine + ATP = 5-amino-1-(5-phospho-beta-D-ribosyl)imidazole + ADP + phosphate + H(+). The protein operates within purine metabolism; IMP biosynthesis via de novo pathway; 5-amino-1-(5-phospho-D-ribosyl)imidazole from N(2)-formyl-N(1)-(5-phospho-D-ribosyl)glycinamide: step 2/2. It functions in the pathway purine metabolism; IMP biosynthesis via de novo pathway; N(1)-(5-phospho-D-ribosyl)glycinamide from 5-phospho-alpha-D-ribose 1-diphosphate: step 2/2. Its function is as follows. Catalyzes the second and fifth step in the 'de novo' purine biosynthesis pathway; contains phosphoribosylamine--glycine ligase (GARS) and phosphoribosylformylglycinamidine cyclo-ligase (AIRS) activities. This chain is Bifunctional purine biosynthetic protein ADE5,7, found in Saccharomyces cerevisiae (strain ATCC 204508 / S288c) (Baker's yeast).